The primary structure comprises 108 residues: Circadian clock oscillator protein KaiB (108 aa).

This sequence belongs to the KaiB family. Undergoes a major conformational rearrangment; in the free state forms homotetramers with 2 dimers. When bound to the CI domain of KaiC, KaiA or CikA switches to a monomeric thioredoxin-fold (KaiB(fs)). The KaiABC complex composition changes during the circadian cycle to control KaiC phosphorylation. Complexes KaiC(6), KaiA(2-4):KaiC(6), KaiB(6):KaiC(6) and KaiC(6):KaiB(6):KaiA(12) are among the most important forms, many form cooperatively. Binds to KaiA; 1 KaiB(fs) binds to the KaiA homodimer. Binds to the B-loop in the CI domain of KaiC; SasA and KaiB compete to bind to the CI domain. Binding to KaiC CI domain occurs 1:1. KaiA and CikA bind to the same region of KaiB(fs) and therefore compete.

In terms of biological role, key component of the KaiABC oscillator complex, which constitutes the main circadian regulator in cyanobacteria. Its composition changes during the circadian cycle to control KaiC phosphorylation. KaiA stimulates KaiC autophosphorylation, while KaiB sequesters KaiA, leading to KaiC autodephosphorylation. KaiA binding to KaiC yields KaiA(2-4):KaiC(6) complexes which stimulate KaiC autophosphorylation. Phospho-Ser-431 KaiC accumulation triggers binding of KaiB to form the KaiB(6):KaiC(6) complex, leading to changes in the output regulators CikA and SasA. KaiB switches to a thioredoxin-like fold (KaiB(fs)) in complex with KaiC. KaiB(6):KaiC(6) formation exposes a site for KaiA binding that sequesters KaiA from the CII domain, making the KaiC(6):KaiB(6):KaiA(12) complex that results in KaiC autodephosphorylation. Complete dephosphorylation of KaiC leads to dissociation of KaiA(2):KaiB(1), completing 1 cycle of the Kai oscillator. A metamorphic protein which reversibly switches between an inactive tetrameric fold and a rare, thioredoxin-like monomeric fold (KaiB(fs)). KaiB(fs) binds phospho-KaiC, KaiA and CikA. KaiA and CikA compete for binding to KaiB(fs), and KaiB(fs) and SasA compete for binding to KaiC, thus the clock oscillator and output signal pathway are tightly coupled. This is Circadian clock oscillator protein KaiB from Thermosynechococcus vestitus (strain NIES-2133 / IAM M-273 / BP-1).